The sequence spans 1021 residues: Disease resistance protein Pikm2-TS (1021 aa).

The tract at residues 1 to 182 is structured coiled coil (CC) domain; it reads MELVVGASEA…PQIIGIKEPV (182 aa). An NB-ARC domain is found at 186 to 519; the sequence is TVMEELEVWL…WIAEGFANEK (334 aa). The disordered stretch occupies residues 297–317; that stretch reads PENDGNPDNTPIRLQETTDDD. LRR repeat units lie at residues 612–634, 659–682, and 683–705; these read LAQV…SFNY, MLLL…IQKL, and EYLE…IVQL. The tract at residues 719-751 is disordered; sequence RKGLRLPQEKSKKPIKNPSPQGKTKEPAKKGFL. LRR repeat units follow at residues 785-807, 817-841, 843-865, 866-888, 912-935, and 957-981; these read LTGL…TFKQ, SCGL…DMPA, PRYL…ITSI, TTLN…ILHI, KDIL…GFKS, and MPAL…ILEN.

The protein belongs to the disease resistance NB-LRR family. Constitutively expressed.

Disease resistance (R) protein. Resistance proteins guard the plant against pathogens that contain an appropriate avirulence protein via an indirect interaction with this avirulence protein. That triggers a defense system including the hypersensitive response, which restricts the pathogen growth. Contribution of Pikm-1 is required to recognize the effector avirulence protein AVR-Pik. This chain is Disease resistance protein Pikm2-TS, found in Oryza sativa subsp. japonica (Rice).